The primary structure comprises 213 residues: Superoxide dismutase [Mn] (213 aa).

The Mn(2+) site is built by His-27, His-82, Asp-168, and His-172.

Belongs to the iron/manganese superoxide dismutase family. In terms of assembly, homodimer.

The enzyme catalyses 2 superoxide + 2 H(+) = H2O2 + O2. Its activity is regulated as follows. Inhibited by hydrogen peroxide. Functionally, destroys superoxide anion radicals which are normally produced within the cells and which are toxic to biological systems. This chain is Superoxide dismutase [Mn] (sodA), found in Haemophilus ducreyi (strain 35000HP / ATCC 700724).